The following is a 210-amino-acid chain: Leucyl/phenylalanyl-tRNA--protein transferase (210 aa).

It belongs to the L/F-transferase family.

It localises to the cytoplasm. It carries out the reaction N-terminal L-lysyl-[protein] + L-leucyl-tRNA(Leu) = N-terminal L-leucyl-L-lysyl-[protein] + tRNA(Leu) + H(+). It catalyses the reaction N-terminal L-arginyl-[protein] + L-leucyl-tRNA(Leu) = N-terminal L-leucyl-L-arginyl-[protein] + tRNA(Leu) + H(+). The enzyme catalyses L-phenylalanyl-tRNA(Phe) + an N-terminal L-alpha-aminoacyl-[protein] = an N-terminal L-phenylalanyl-L-alpha-aminoacyl-[protein] + tRNA(Phe). Functions in the N-end rule pathway of protein degradation where it conjugates Leu, Phe and, less efficiently, Met from aminoacyl-tRNAs to the N-termini of proteins containing an N-terminal arginine or lysine. The polypeptide is Leucyl/phenylalanyl-tRNA--protein transferase (Roseobacter denitrificans (strain ATCC 33942 / OCh 114) (Erythrobacter sp. (strain OCh 114))).